The chain runs to 158 residues: C-type lectin lectoxin-Thr1 (158 aa).

The N-terminal stretch at 1–23 is a signal peptide; it reads MGRFIFATLGLLLVAFSINGAKG. 3 cysteine pairs are disulfide-bonded: Cys-26–Cys-37, Cys-54–Cys-154, and Cys-129–Cys-146. Residues 33–155 enclose the C-type lectin domain; it reads LKGFCYKVFN…CASTRAYLCK (123 aa). The Mannose-binding signature appears at 119–121; it reads EPN. 3 residues coordinate Ca(2+): Glu-127, Asn-142, and Asp-143.

This sequence belongs to the true venom lectin family. As to expression, expressed by the venom gland.

Its subcellular location is the secreted. In terms of biological role, mannose-binding lectin which recognizes specific carbohydrate structures and agglutinates a variety of animal cells by binding to cell-surface glycoproteins and glycolipids. May be a calcium-dependent lectin. The chain is C-type lectin lectoxin-Thr1 from Thrasops jacksonii (Jackson's black tree snake).